Reading from the N-terminus, the 899-residue chain is Conserved oligomeric Golgi complex subunit 3 (899 aa).

Belongs to the COG3 family. In terms of assembly, component of the conserved oligomeric Golgi complex which is composed of eight different subunits and is required for normal Golgi morphology and localization.

The protein resides in the golgi apparatus membrane. In terms of biological role, involved in ER-Golgi transport. The sequence is that of Conserved oligomeric Golgi complex subunit 3 from Aedes aegypti (Yellowfever mosquito).